A 295-amino-acid chain; its full sequence is Protease Rv3090 (295 aa).

Transmembrane regions (helical) follow at residues 2–22 and 37–57; these read TWQI…ALFW and VTIA…FTIV.

It localises to the cell membrane. It is found in the secreted. The protein resides in the cell wall. Protease that triggers late cell apoptosis and contributes to the pathogenicity and dissemination of M.tuberculosis. In a mouse model of infection, can induce hepatocyte and lung cell apoptosis and cause pathological damage to the spleen, liver and lungs. Specifically stimulates the secretion of inflammatory cytokines including TNF-alpha, IL-6 and IL-1 beta. Can degrade casein in vitro. This chain is Protease Rv3090, found in Mycobacterium tuberculosis (strain ATCC 25618 / H37Rv).